The following is a 549-amino-acid chain: Chaperonin GroEL (549 aa).

Residues 29 to 32 (TLGP), K50, 86 to 90 (DGTTT), G414, 477 to 479 (NAA), and D493 contribute to the ATP site.

It belongs to the chaperonin (HSP60) family. As to quaternary structure, forms a cylinder of 14 subunits composed of two heptameric rings stacked back-to-back. Interacts with the co-chaperonin GroES.

The protein localises to the cytoplasm. The enzyme catalyses ATP + H2O + a folded polypeptide = ADP + phosphate + an unfolded polypeptide.. Its function is as follows. Together with its co-chaperonin GroES, plays an essential role in assisting protein folding. The GroEL-GroES system forms a nano-cage that allows encapsulation of the non-native substrate proteins and provides a physical environment optimized to promote and accelerate protein folding. The chain is Chaperonin GroEL from Geotalea uraniireducens (strain Rf4) (Geobacter uraniireducens).